Here is a 429-residue protein sequence, read N- to C-terminus: Probable M18 family aminopeptidase 2 (429 aa).

Zn(2+) contacts are provided by His-82, His-156, and His-401.

This sequence belongs to the peptidase M18 family. Zn(2+) is required as a cofactor.

This Ectopseudomonas mendocina (strain ymp) (Pseudomonas mendocina) protein is Probable M18 family aminopeptidase 2.